The following is a 426-amino-acid chain: Endoglucanase Z (426 aa).

The N-terminal stretch at 1 to 43 is a signal peptide; sequence MPLSYLDKNPVIDSKKHALRKKLFLSCAYFGLSLACLSSNAWA. Residues 44 to 332 form a catalytic region; the sequence is SVEPLSVNGN…VKSIIQSWPY (289 aa). The active-site Proton donor is the glutamate 176. The active-site Nucleophile is the glutamate 263. A linker region spans residues 333–366; that stretch reads KAGSAASATTDPSTDTTTDTTVDEPTTTDTPATA. The segment at 336–367 is disordered; sequence SAASATTDPSTDTTTDTTVDEPTTTDTPATAD. The cellulose-binding stretch occupies residues 367–426; the sequence is DCANANVYPNWVSKDWAGGQPTHNEAGQSIVYKGNLYTANWYTASVPGSDSSWTQVGSCN. Cysteine 368 and cysteine 425 are disulfide-bonded.

The protein belongs to the glycosyl hydrolase 5 (cellulase A) family.

It is found in the secreted. It carries out the reaction Endohydrolysis of (1-&gt;4)-beta-D-glucosidic linkages in cellulose, lichenin and cereal beta-D-glucans.. In terms of biological role, represents 97% of the global cellulase activity. This Dickeya dadantii (strain 3937) (Erwinia chrysanthemi (strain 3937)) protein is Endoglucanase Z (celZ).